The primary structure comprises 124 residues: Glycine cleavage system H protein (124 aa).

A Lipoyl-binding domain is found at 19–101 (VATVGITNHA…EGEGWLFKME (83 aa)). Residue K60 is modified to N6-lipoyllysine.

It belongs to the GcvH family. As to quaternary structure, the glycine cleavage system is composed of four proteins: P, T, L and H. Requires (R)-lipoate as cofactor.

In terms of biological role, the glycine cleavage system catalyzes the degradation of glycine. The H protein shuttles the methylamine group of glycine from the P protein to the T protein. This is Glycine cleavage system H protein from Thermotoga maritima (strain ATCC 43589 / DSM 3109 / JCM 10099 / NBRC 100826 / MSB8).